The chain runs to 302 residues: Meiotic recombination protein rec14 (302 aa).

WD repeat units lie at residues 14–51 (AHQA…HSLV), 57–96 (PHKL…FRDL), 101–140 (QHPS…KISE), 142–184 (DTKG…HVLS), 185–226 (GHTS…GQLR), 227–266 (GHAA…CIST), and 269–302 (ETDG…AATE).

In terms of assembly, component of the DSB catalytic core (DSBC) complex, composed of at least rec12, rec6 and rec14. The complex interacts with mde2.

Its function is as follows. Required for formation of the rec12-mediated double-strand breaks (DSBs) that initiate meiotic recombination. The sequence is that of Meiotic recombination protein rec14 from Schizosaccharomyces pombe (strain 972 / ATCC 24843) (Fission yeast).